Consider the following 164-residue polypeptide: Endoribonuclease YbeY (164 aa).

Residues H120, H124, and H130 each contribute to the Zn(2+) site.

Belongs to the endoribonuclease YbeY family. It depends on Zn(2+) as a cofactor.

The protein localises to the cytoplasm. Its function is as follows. Single strand-specific metallo-endoribonuclease involved in late-stage 70S ribosome quality control and in maturation of the 3' terminus of the 16S rRNA. The chain is Endoribonuclease YbeY from Acidothermus cellulolyticus (strain ATCC 43068 / DSM 8971 / 11B).